The chain runs to 605 residues: Terpenoid synthase 18 (605 aa).

Mg(2+)-binding residues include D356, D360, N500, T504, and E508. The DDXXD motif motif lies at 356–360; it reads DDTYD.

Belongs to the terpene synthase family. Tpsa subfamily. It depends on Mg(2+) as a cofactor. The cofactor is Mn(2+). In terms of tissue distribution, predominantly expressed in flowers and siliques but also in roots and leaves.

It localises to the cytoplasm. The protein operates within secondary metabolite biosynthesis; terpenoid biosynthesis. The protein is Terpenoid synthase 18 (TPS18) of Arabidopsis thaliana (Mouse-ear cress).